Reading from the N-terminus, the 598-residue chain is Aluminum-activated malate transporter 9 (598 aa).

6 consecutive transmembrane segments (helical) span residues 88 to 108, 117 to 137, 144 to 164, 170 to 190, 194 to 214, and 227 to 247; these read IVFSAKIGLALTIVALLIFYQ, YSVWAILTVVVVFEFTIGATL, ALGTLSAGGLALGMAELSTLF, IFCTLSIFCIGFLATFMKLYP, AYEYGFRVFLLTYCYILISGF, and FLLIALGAGVSLGVNMFIYPI.

The protein belongs to the aromatic acid exporter (TC 2.A.85) family. Expressed in hypocotyls, leaves, roots, flowers, sepals and stamina. In leaves, expressed almost exclusively in mesophyll cells.

Its subcellular location is the vacuole membrane. Its activity is regulated as follows. Slow activation by external aluminum. Its function is as follows. Vacuolar malate channel. Has a higher selectivity for malate than for fumarate. Also exhibits a weak chloride conductance. In Arabidopsis thaliana (Mouse-ear cress), this protein is Aluminum-activated malate transporter 9 (ALMT9).